A 760-amino-acid polypeptide reads, in one-letter code: MRYNQFSYIPTSLERAAEELKELGFDLDLQKTAKVNLESFLRKLFFHYPDSDYPLSHLITKNDMDALSFFQSEQELSKEVFDLLALQVLGFIPGVDFTEADAFLDKLAFPIHFDETEIIKHIHHILATRCKSGMTLIDDLVSQGMLTMDNDYHFFNGKSLATFDTSQLIREVVYVEAPLDTDQDGQLDLIKVNIIRPQSQKPLPTLMTPSPYHQGINEVANDKKLYRMEKELVVKKRRQITVEDRDFIPLETQPCKLPIGQNLEIFSYINSYSLNDYFLARGFANIYVSGVGTAGSTGFMTSGDYAQIESFKAVIDWLNGRATAYTSHSKTHQVRADWANGLVCTTGKSYLGTMSTGLATTGVDGLAMIIAESAISSWYNYYRENGLVCSPGGYPGEDLDVLTELTYSRNLLAGDYLRHNDRYQELLNQQSQALDRQSGDYNQFWHDRNYLKNAHQIKCDVVYTHGLQDWNVKPRQVYEIVNALPSTINKHLFLHQGEHVYMHNWQSIDFRESMNVLLCQKLLGLANDFSLPEMIWQDNTCPQNWQERKVFGTSTIKELDLGQELLLIDNHYGEDEFKAYGKDFRAFKAALFKGKANQALVDILLEEDLPINGEIVLQLKVKSSENKGLLSAQILDYGKKKRLGDLPIALTQSSIDNGQNFSREPLKELPFREDSYRVISKGFMNLQNRNNLSSIETIPNNKWMTVRLPLQPTIYHLEKGDTLRVILYTTDFEHTVRDNSNYALTIDLSQSQLIVPIASN.

Residues serine 349, aspartate 469, and histidine 499 each act as charge relay system in the active site.

It belongs to the peptidase S15 family. As to quaternary structure, homodimer.

The protein resides in the cytoplasm. The enzyme catalyses Hydrolyzes Xaa-Pro-|- bonds to release unblocked, N-terminal dipeptides from substrates including Ala-Pro-|-p-nitroanilide and (sequentially) Tyr-Pro-|-Phe-Pro-|-Gly-Pro-|-Ile.. Its function is as follows. Removes N-terminal dipeptides sequentially from polypeptides having unsubstituted N-termini provided that the penultimate residue is proline. The sequence is that of Xaa-Pro dipeptidyl-peptidase from Streptococcus pyogenes serotype M5 (strain Manfredo).